The primary structure comprises 603 residues: MVTHRRKGGSGPPQKPPPRIVDRSSFDADKKKIKVEKLYHKANNPDNDWPFSFGSVFKMLLSIRISGAIWGIINDCDEVYNYWEPLHLFLYGEGFQTWEYSPVYAIRSYFYIYLHYIPASLFANLFGDTKIVVFTLIRLTIGLFCLLGEYYAFDAICKKINIATGRFFILFSIFSSGMFLASTAFVPSSFCMAITFYILGAYLNENWTAGIFCVAFSTMVGWPFSAVLGLPIVADMLLLKGLRIRFILTSLVIGLCIGGVQVITDSHYFGKTVLAPLNIFLYNVVSGPGPSLYGEEPLSFYIKNLFNNWNIVIFAAPFGFPLSLAYFTKVWMSQDRNVALYQRFAPIILLAVTTAAWLLIFGSQAHKEERFLFPIYPFIAFFAALALDATNRLCLKKLGMDNILSILFILCFAILSASRTYSIHNNYGSHVEIYRSLNAELTNRTNFKNFHDPIRVCVGKEWHRFPSSFFIPQTVSDGKKVEMRFIQSEFRGLLPKPFLKSDKLVEVTRHIPTEMNNLNQEEISRYVDLDSCDYVVDVDMPQSDREPDFRKMEDNWKPVDSLPFIDVSKSTGFHGLLRAFYVPFLSAKHNVMTTCTLYRKSNL.

The tract at residues 1 to 25 (MVTHRRKGGSGPPQKPPPRIVDRSS) is disordered. Residues 1–108 (MVTHRRKGGS…EYSPVYAIRS (108 aa)) lie on the Lumenal side of the membrane. The helical transmembrane segment at 109–129 (YFYIYLHYIPASLFANLFGDT) threads the bilayer. Position 130 (Lys-130) is a topological domain, cytoplasmic. Residues 131–151 (IVVFTLIRLTIGLFCLLGEYY) form a helical membrane-spanning segment. The Lumenal segment spans residues 152-166 (AFDAICKKINIATGR). A helical transmembrane segment spans residues 167–187 (FFILFSIFSSGMFLASTAFVP). Over 188–195 (SSFCMAIT) the chain is Cytoplasmic. A helical membrane pass occupies residues 196 to 216 (FYILGAYLNENWTAGIFCVAF). The Lumenal portion of the chain corresponds to 217-218 (ST). Residues 219 to 239 (MVGWPFSAVLGLPIVADMLLL) form a helical membrane-spanning segment. The Cytoplasmic portion of the chain corresponds to 240–245 (KGLRIR). The helical transmembrane segment at 246–266 (FILTSLVIGLCIGGVQVITDS) threads the bilayer. Over 267–310 (HYFGKTVLAPLNIFLYNVVSGPGPSLYGEEPLSFYIKNLFNNWN) the chain is Lumenal. Residues 311-331 (IVIFAAPFGFPLSLAYFTKVW) form a helical membrane-spanning segment. Residues 332–343 (MSQDRNVALYQR) are Cytoplasmic-facing. Residues 344 to 364 (FAPIILLAVTTAAWLLIFGSQ) form a helical membrane-spanning segment. Over 365-370 (AHKEER) the chain is Lumenal. The chain crosses the membrane as a helical span at residues 371–391 (FLFPIYPFIAFFAALALDATN). Over 392-397 (RLCLKK) the chain is Cytoplasmic. Residues 398–418 (LGMDNILSILFILCFAILSAS) traverse the membrane as a helical segment. The Lumenal segment spans residues 419 to 603 (RTYSIHNNYG…TCTLYRKSNL (185 aa)). Asn-443 carries N-linked (GlcNAc...) asparagine glycosylation.

Belongs to the glycosyltransferase 22 family.

It localises to the endoplasmic reticulum membrane. It carries out the reaction an alpha-D-Man-(1-&gt;2)-alpha-D-Man-(1-&gt;2)-alpha-D-Man-(1-&gt;3)-[alpha-D-Man-(1-&gt;3)-alpha-D-Man-(1-&gt;6)]-beta-D-Man-(1-&gt;4)-beta-D-GlcNAc-(1-&gt;4)-alpha-D-GlcNAc-diphospho-di-trans,poly-cis-dolichol + a di-trans,poly-cis-dolichyl beta-D-mannosyl phosphate = an alpha-D-Man-(1-&gt;2)-alpha-D-Man-(1-&gt;2)-alpha-D-Man-(1-&gt;3)-[alpha-D-Man-(1-&gt;2)-alpha-D-Man-(1-&gt;3)-alpha-D-Man-(1-&gt;6)]-beta-D-Man-(1-&gt;4)-beta-D-GlcNAc-(1-&gt;4)-alpha-D-GlcNAc-diphospho-di-trans,poly-cis-dolichol + a di-trans,poly-cis-dolichyl phosphate + H(+). The enzyme catalyses an alpha-D-Man-(1-&gt;2)-alpha-D-Man-(1-&gt;2)-alpha-D-Man-(1-&gt;3)-[alpha-D-Man-(1-&gt;2)-alpha-D-Man-(1-&gt;3)-[alpha-D-Man-(1-&gt;6)]-alpha-D-Man-(1-&gt;6)]-beta-D-Man-(1-&gt;4)-beta-D-GlcNAc-(1-&gt;4)-alpha-D-GlcNAc-diphospho-di-trans,poly-cis-dolichol + a di-trans,poly-cis-dolichyl beta-D-mannosyl phosphate = an alpha-D-Man-(1-&gt;2)-alpha-D-Man-(1-&gt;2)-alpha-D-Man-(1-&gt;3)-[alpha-D-Man-(1-&gt;2)-alpha-D-Man-(1-&gt;3)-[alpha-D-Man-(1-&gt;2)-alpha-D-Man-(1-&gt;6)]-alpha-D-Man-(1-&gt;6)]-beta-D-Man-(1-&gt;4)-beta-D-GlcNAc-(1-&gt;4)-alpha-D-GlcNAc-diphospho-di-trans,poly-cis-dolichol + a di-trans,poly-cis-dolichyl phosphate + H(+). It functions in the pathway protein modification; protein glycosylation. Catalyzes the transfer of mannose from Dol-P-Man to lipid-linked oligosaccharides. The chain is Alpha-1,2-mannosyltransferase algn-9 from Caenorhabditis elegans.